Consider the following 492-residue polypeptide: Putative cytochrome P450 136 (492 aa).

Residue Cys-439 participates in heme binding.

The protein belongs to the cytochrome P450 family. Heme serves as cofactor.

The sequence is that of Putative cytochrome P450 136 (cyp136) from Mycobacterium tuberculosis (strain CDC 1551 / Oshkosh).